The chain runs to 141 residues: MAKKVMKLVKLQIPAGKANPAPPVGPALGQAGVNIMGFCKEFNARTQDQAGLIIPVVITVFEDRSFTFITKTPPAAVLLKKAAGIESGSGEPNRKKVATVKRDKVREIAETKMPDLNAASVETAMLMVEGTARSMGIVIED.

Belongs to the universal ribosomal protein uL11 family. As to quaternary structure, part of the ribosomal stalk of the 50S ribosomal subunit. Interacts with L10 and the large rRNA to form the base of the stalk. L10 forms an elongated spine to which L12 dimers bind in a sequential fashion forming a multimeric L10(L12)X complex. Post-translationally, one or more lysine residues are methylated.

Forms part of the ribosomal stalk which helps the ribosome interact with GTP-bound translation factors. This is Large ribosomal subunit protein uL11 from Exiguobacterium sibiricum (strain DSM 17290 / CCUG 55495 / CIP 109462 / JCM 13490 / 255-15).